Consider the following 145-residue polypeptide: MRALIQRVSEASVTVEGECLGEIGPGLLILVCAMQGDGEAQASALAARIAKLRIFKDEAGKMNRSVRDTGGAALVVSQFTLAADTSRGNRPGFSAAAPPADGERLYRQFAAEIAACGIPTATGRFGADMKVRLLNDGPVTIWMES.

Residues 137–138 (GP) carry the Gly-cisPro motif, important for rejection of L-amino acids motif.

Belongs to the DTD family. In terms of assembly, homodimer.

Its subcellular location is the cytoplasm. The enzyme catalyses glycyl-tRNA(Ala) + H2O = tRNA(Ala) + glycine + H(+). It catalyses the reaction a D-aminoacyl-tRNA + H2O = a tRNA + a D-alpha-amino acid + H(+). An aminoacyl-tRNA editing enzyme that deacylates mischarged D-aminoacyl-tRNAs. Also deacylates mischarged glycyl-tRNA(Ala), protecting cells against glycine mischarging by AlaRS. Acts via tRNA-based rather than protein-based catalysis; rejects L-amino acids rather than detecting D-amino acids in the active site. By recycling D-aminoacyl-tRNA to D-amino acids and free tRNA molecules, this enzyme counteracts the toxicity associated with the formation of D-aminoacyl-tRNA entities in vivo and helps enforce protein L-homochirality. The protein is D-aminoacyl-tRNA deacylase of Cereibacter sphaeroides (strain KD131 / KCTC 12085) (Rhodobacter sphaeroides).